Reading from the N-terminus, the 617-residue chain is Putative type VI secretion system protein VgrGA (617 aa).

2 disordered regions span residues 325–344 (GQQP…TLSN) and 449–469 (RTFH…TRTS).

This sequence belongs to the VgrG protein family.

Its function is as follows. A Vgr protein that is probably part of a type VI secretion system (T6SS). May be required for export of proteins involved in Rhs-mediated cellular contact-dependent growth inhibition (CDI). This chain is Putative type VI secretion system protein VgrGA (vgrGA), found in Dickeya dadantii (strain 3937) (Erwinia chrysanthemi (strain 3937)).